The chain runs to 350 residues: Biotin synthase (350 aa).

The region spanning 41–268 is the Radical SAM core domain; sequence NEVQISRLLS…KSRVRLSAGR (228 aa). Cys56, Cys60, and Cys63 together coordinate [4Fe-4S] cluster. Cys100, Cys131, Cys191, and Arg263 together coordinate [2Fe-2S] cluster.

It belongs to the radical SAM superfamily. Biotin synthase family. Homodimer. [4Fe-4S] cluster is required as a cofactor. The cofactor is [2Fe-2S] cluster.

It catalyses the reaction (4R,5S)-dethiobiotin + (sulfur carrier)-SH + 2 reduced [2Fe-2S]-[ferredoxin] + 2 S-adenosyl-L-methionine = (sulfur carrier)-H + biotin + 2 5'-deoxyadenosine + 2 L-methionine + 2 oxidized [2Fe-2S]-[ferredoxin]. It participates in cofactor biosynthesis; biotin biosynthesis; biotin from 7,8-diaminononanoate: step 2/2. Catalyzes the conversion of dethiobiotin (DTB) to biotin by the insertion of a sulfur atom into dethiobiotin via a radical-based mechanism. The chain is Biotin synthase from Shewanella piezotolerans (strain WP3 / JCM 13877).